We begin with the raw amino-acid sequence, 440 residues long: UDP-N-acetylglucosamine 1-carboxyvinyltransferase 1 (440 aa).

22–23 (KN) is a phosphoenolpyruvate binding site. Residue R93 coordinates UDP-N-acetyl-alpha-D-glucosamine. Catalysis depends on C117, which acts as the Proton donor. C117 bears the 2-(S-cysteinyl)pyruvic acid O-phosphothioketal mark. Residues 122-126 (RPIDQ), D306, and V328 each bind UDP-N-acetyl-alpha-D-glucosamine.

This sequence belongs to the EPSP synthase family. MurA subfamily.

Its subcellular location is the cytoplasm. It carries out the reaction phosphoenolpyruvate + UDP-N-acetyl-alpha-D-glucosamine = UDP-N-acetyl-3-O-(1-carboxyvinyl)-alpha-D-glucosamine + phosphate. It participates in cell wall biogenesis; peptidoglycan biosynthesis. Functionally, cell wall formation. Adds enolpyruvyl to UDP-N-acetylglucosamine. This Halalkalibacterium halodurans (strain ATCC BAA-125 / DSM 18197 / FERM 7344 / JCM 9153 / C-125) (Bacillus halodurans) protein is UDP-N-acetylglucosamine 1-carboxyvinyltransferase 1.